The sequence spans 121 residues: General odorant-binding protein 72 (121 aa).

2 disulfides stabilise this stretch: C45–C101 and C90–C110.

This sequence belongs to the PBP/GOBP family.

It localises to the secreted. Its function is as follows. Present in the aqueous fluid surrounding olfactory sensory dendrites and are thought to aid in the capture and transport of hydrophobic odorants into and through this fluid. The chain is General odorant-binding protein 72 (Obp72) from Anopheles gambiae (African malaria mosquito).